The primary structure comprises 105 residues: Small ribosomal subunit protein uS10 (105 aa).

Belongs to the universal ribosomal protein uS10 family. Part of the 30S ribosomal subunit.

In terms of biological role, involved in the binding of tRNA to the ribosomes. This Rickettsia canadensis (strain McKiel) protein is Small ribosomal subunit protein uS10.